The primary structure comprises 446 residues: 3-phosphoshikimate 1-carboxyvinyltransferase (446 aa).

3-phosphoshikimate contacts are provided by K26, S27, and R31. K26 is a phosphoenolpyruvate binding site. 2 residues coordinate phosphoenolpyruvate: G100 and R128. 3-phosphoshikimate contacts are provided by S171, S172, Q173, S200, E315, and H344. Residue Q173 participates in phosphoenolpyruvate binding. Residue E315 is the Proton acceptor of the active site. Phosphoenolpyruvate contacts are provided by R348, R389, and K414.

Belongs to the EPSP synthase family. As to quaternary structure, monomer.

It is found in the cytoplasm. It carries out the reaction 3-phosphoshikimate + phosphoenolpyruvate = 5-O-(1-carboxyvinyl)-3-phosphoshikimate + phosphate. Its pathway is metabolic intermediate biosynthesis; chorismate biosynthesis; chorismate from D-erythrose 4-phosphate and phosphoenolpyruvate: step 6/7. Functionally, catalyzes the transfer of the enolpyruvyl moiety of phosphoenolpyruvate (PEP) to the 5-hydroxyl of shikimate-3-phosphate (S3P) to produce enolpyruvyl shikimate-3-phosphate and inorganic phosphate. In Mycolicibacterium gilvum (strain PYR-GCK) (Mycobacterium gilvum (strain PYR-GCK)), this protein is 3-phosphoshikimate 1-carboxyvinyltransferase.